Here is a 217-residue protein sequence, read N- to C-terminus: PRA1 family protein B3 (217 aa).

Residues 1–24 are disordered; sequence MMANPPTLPISDHSGGGSQSQQPV. Transmembrane regions (helical) follow at residues 76 to 96, 98 to 118, 138 to 158, 162 to 182, and 193 to 213; these read LPYF…LSLL, HPFS…LYLF, LGVL…GSLL, LMIG…EDLF, and LLSF…STPA.

The protein belongs to the PRA1 family. As to quaternary structure, interacts with PRA1B1, PRA1B2, PRA1B4, PRA1B5, PRA1B6 and PRA1E. Expressed in hypocotyls and shoot apex.

It localises to the endosome membrane. In terms of biological role, may be involved in both secretory and endocytic intracellular trafficking in the endosomal/prevacuolar compartments. This Arabidopsis thaliana (Mouse-ear cress) protein is PRA1 family protein B3 (PRA1B3).